Consider the following 207-residue polypeptide: Small ribosomal subunit protein uS4 (207 aa).

The tract at residues 31 to 55 is disordered; the sequence is KCKLDSKPGQHGRTSGARTSDYGTQ. A compositionally biased stretch (polar residues) spans 42–53; that stretch reads GRTSGARTSDYG. The S4 RNA-binding domain maps to 97 to 160; that stretch reads SRLDNVVYRM…KKQARIVEAL (64 aa).

Belongs to the universal ribosomal protein uS4 family. As to quaternary structure, part of the 30S ribosomal subunit. Contacts protein S5. The interaction surface between S4 and S5 is involved in control of translational fidelity.

Functionally, one of the primary rRNA binding proteins, it binds directly to 16S rRNA where it nucleates assembly of the body of the 30S subunit. In terms of biological role, with S5 and S12 plays an important role in translational accuracy. The protein is Small ribosomal subunit protein uS4 of Burkholderia orbicola (strain MC0-3).